A 240-amino-acid polypeptide reads, in one-letter code: Large ribosomal subunit protein bL25 (240 aa).

Residues 1-24 (MATVMEFKATARPKSGKGAARAER) form a disordered region.

This sequence belongs to the bacterial ribosomal protein bL25 family. CTC subfamily. As to quaternary structure, part of the 50S ribosomal subunit; part of the 5S rRNA/L5/L18/L25 subcomplex. Contacts the 5S rRNA. Binds to the 5S rRNA independently of L5 and L18.

In terms of biological role, this is one of the proteins that binds to the 5S RNA in the ribosome where it forms part of the central protuberance. In Rhodopseudomonas palustris (strain HaA2), this protein is Large ribosomal subunit protein bL25.